Reading from the N-terminus, the 757-residue chain is MRDMRASSPETTSAVKCPFNKTAVEGTHNKDWWPNQLRVDLLHQHSNKSNPLGETFDYAKVFQKLDYAALKRDLHALMTDSQDWWPADFGHYGGLFIRMAWHSAGTYRIGDGRGGAGRGQQRFAPLNSWPDNVSLDKARRLLWPIKKKYGQQISWADLIVLAGNVALESMGFKTFGFAGGRVDTWEPDQDVYWGREMTWLGGDVRYGAVSEGVHHPDEHSGAKEKASKNSDSRVLENPLAAVQMGLIYVNPEGPDGRPDPLASARDIRETFARMAMNDEETVALIAGGHTFGKTHGAAPADNVGPEPEAGELEQQGLGWHNRFGSGKAGDTITSGLEVTWTKTPTQWSNDFFEHLFGYEWELTKSPAGAYQWVAKDAAATIPHAHDPSKKLLPMMLTSDLALRFDPVYEKISRHFHAHPDQFADAFARAWFKLTHRDMGPRVRYLGPEVPAEELIWQDPVPKVSHVLVDAQDLLALKHKISASGLGISQLVSTAWASASTFRGSDKRGGANGGRLCLAPQNQWEVNQPQQLSVVLETLRRVQTEFNAQAGDKRISLADLIVLAGGVGVEQAAKRVGIVVEVPFVPGRTDALQEQTDVSSFAPLEPFADGFRNYVKGDEVVPSEHLLIDRAQLLTLTAPEMTVLIGGLRVLGANVGGVKHGVFTDRLGTLSNDFFINLLDMGTEWAPVSKERHVFEGRDRRTGVLKWTGTRVDLVFGSNALLRALAEVYAAVDAQEKFVRDFVAAWSKVMHLDRFDLV.

The segment at residues 101 to 248 (WHSAGTYRIG…LAAVQMGLIY (148 aa)) is a cross-link (tryptophyl-tyrosyl-methioninium (Trp-Tyr) (with M-274)). Residue histidine 102 is the Proton acceptor of the active site. A disordered region spans residues 210–231 (SEGVHHPDEHSGAKEKASKNSD). Residues 212–231 (GVHHPDEHSGAKEKASKNSD) show a composition bias toward basic and acidic residues. The segment at residues 248-274 (YVNPEGPDGRPDPLASARDIRETFARM) is a cross-link (tryptophyl-tyrosyl-methioninium (Tyr-Met) (with W-101)). Position 289 (histidine 289) interacts with heme b. Residues 293–312 (KTHGAAPADNVGPEPEAGEL) are disordered.

The protein belongs to the peroxidase family. Peroxidase/catalase subfamily. In terms of assembly, homodimer or homotetramer. Heme b serves as cofactor. Post-translationally, formation of the three residue Trp-Tyr-Met cross-link is important for the catalase, but not the peroxidase activity of the enzyme.

The enzyme catalyses H2O2 + AH2 = A + 2 H2O. It carries out the reaction 2 H2O2 = O2 + 2 H2O. Bifunctional enzyme with both catalase and broad-spectrum peroxidase activity. This Xylella fastidiosa (strain M12) protein is Catalase-peroxidase.